The primary structure comprises 388 residues: Succinate--CoA ligase [ADP-forming] subunit beta (388 aa).

The region spanning 9–244 (KQLFARYGMP…LSQEDERESR (236 aa)) is the ATP-grasp domain. ATP-binding positions include K46, 53–55 (GRG), E99, T102, and E107. Mg(2+) contacts are provided by N199 and D213. Substrate contacts are provided by residues N264 and 321-323 (GIV).

The protein belongs to the succinate/malate CoA ligase beta subunit family. In terms of assembly, heterotetramer of two alpha and two beta subunits. Mg(2+) serves as cofactor.

The enzyme catalyses succinate + ATP + CoA = succinyl-CoA + ADP + phosphate. It catalyses the reaction GTP + succinate + CoA = succinyl-CoA + GDP + phosphate. The protein operates within carbohydrate metabolism; tricarboxylic acid cycle; succinate from succinyl-CoA (ligase route): step 1/1. Functionally, succinyl-CoA synthetase functions in the citric acid cycle (TCA), coupling the hydrolysis of succinyl-CoA to the synthesis of either ATP or GTP and thus represents the only step of substrate-level phosphorylation in the TCA. The beta subunit provides nucleotide specificity of the enzyme and binds the substrate succinate, while the binding sites for coenzyme A and phosphate are found in the alpha subunit. The polypeptide is Succinate--CoA ligase [ADP-forming] subunit beta (Serratia proteamaculans (strain 568)).